Reading from the N-terminus, the 205-residue chain is Variable small protein 11 (205 aa).

The first 18 residues, 1–18, serve as a signal peptide directing secretion; the sequence is MRKRISAIIMTLFMVFMS. Cys19 carries N-palmitoyl cysteine lipidation. The S-diacylglycerol cysteine moiety is linked to residue Cys19.

It belongs to the variable small protein (Vsp) family.

Its subcellular location is the cell outer membrane. The Vlp and Vsp proteins are antigenically distinct proteins, only one vlp or vsp gene is transcriptionally active at any one time. Switching between these genes is a mechanism of host immune response evasion. This is Variable small protein 11 from Borrelia hermsii.